The sequence spans 514 residues: Glutamyl-tRNA(Gln) amidotransferase subunit A (514 aa).

Residues Lys-76 and Ser-151 each act as charge relay system in the active site. Ser-175 serves as the catalytic Acyl-ester intermediate.

The protein belongs to the amidase family. GatA subfamily. As to quaternary structure, heterotrimer of A, B and C subunits.

It catalyses the reaction L-glutamyl-tRNA(Gln) + L-glutamine + ATP + H2O = L-glutaminyl-tRNA(Gln) + L-glutamate + ADP + phosphate + H(+). In terms of biological role, allows the formation of correctly charged Gln-tRNA(Gln) through the transamidation of misacylated Glu-tRNA(Gln) in organisms which lack glutaminyl-tRNA synthetase. The reaction takes place in the presence of glutamine and ATP through an activated gamma-phospho-Glu-tRNA(Gln). The protein is Glutamyl-tRNA(Gln) amidotransferase subunit A of Salinibacter ruber (strain DSM 13855 / M31).